The chain runs to 263 residues: tRNA (guanine-N(7)-)-methyltransferase (263 aa).

Residues 1-39 (MVHHGQMHAQPGVGLRPDTPVASGQLPSTSIRSRRSGIS) are disordered. E82, D107, N136, and D159 together coordinate S-adenosyl-L-methionine. Residue D159 is part of the active site. Residues K163, D195, and 232 to 235 (TKYE) contribute to the substrate site.

This sequence belongs to the class I-like SAM-binding methyltransferase superfamily. TrmB family.

It catalyses the reaction guanosine(46) in tRNA + S-adenosyl-L-methionine = N(7)-methylguanosine(46) in tRNA + S-adenosyl-L-homocysteine. It functions in the pathway tRNA modification; N(7)-methylguanine-tRNA biosynthesis. Its function is as follows. Catalyzes the formation of N(7)-methylguanine at position 46 (m7G46) in tRNA. The chain is tRNA (guanine-N(7)-)-methyltransferase from Mycobacterium bovis (strain ATCC BAA-935 / AF2122/97).